We begin with the raw amino-acid sequence, 279 residues long: NADPH-dependent 7-cyano-7-deazaguanine reductase (279 aa).

A substrate-binding site is contributed by 86–88 (IES). 88 to 89 (SK) is a binding site for NADPH. C187 (thioimide intermediate) is an active-site residue. The active-site Proton donor is the D194. 226 to 227 (HE) contributes to the substrate binding site. 255-256 (RG) lines the NADPH pocket.

It belongs to the GTP cyclohydrolase I family. QueF type 2 subfamily. Homodimer.

Its subcellular location is the cytoplasm. The catalysed reaction is 7-aminomethyl-7-carbaguanine + 2 NADP(+) = 7-cyano-7-deazaguanine + 2 NADPH + 3 H(+). The protein operates within tRNA modification; tRNA-queuosine biosynthesis. Its function is as follows. Catalyzes the NADPH-dependent reduction of 7-cyano-7-deazaguanine (preQ0) to 7-aminomethyl-7-deazaguanine (preQ1). This is NADPH-dependent 7-cyano-7-deazaguanine reductase from Histophilus somni (strain 129Pt) (Haemophilus somnus).